The sequence spans 206 residues: Uridine kinase (206 aa).

Glycine 11–serine 18 contacts ATP.

Belongs to the uridine kinase family.

The protein resides in the cytoplasm. The catalysed reaction is uridine + ATP = UMP + ADP + H(+). The enzyme catalyses cytidine + ATP = CMP + ADP + H(+). It participates in pyrimidine metabolism; CTP biosynthesis via salvage pathway; CTP from cytidine: step 1/3. Its pathway is pyrimidine metabolism; UMP biosynthesis via salvage pathway; UMP from uridine: step 1/1. The sequence is that of Uridine kinase from Clostridium botulinum (strain Okra / Type B1).